Here is a 676-residue protein sequence, read N- to C-terminus: UvrABC system protein B (676 aa).

The Helicase ATP-binding domain maps to 39–424 (RGILDGIPSQ…RGHIIEQIIR (386 aa)). An ATP-binding site is contributed by 52-59 (GTTGSGKT). The Beta-hairpin motif lies at 105–128 (YYDYYQPEAYIARSDTYIEKSLLI). Positions 441–604 (QIDDLLEEIR…ITPKPIIKPI (164 aa)) constitute a Helicase C-terminal domain. A disordered region spans residues 611-631 (KEGAQEDSRPETQSTEDLESS). The 36-residue stretch at 629–664 (ESSIKQYEEAMYKAAQDFQFDEAAKYRDLMNAAKRQ) folds into the UVR domain.

The protein belongs to the UvrB family. In terms of assembly, forms a heterotetramer with UvrA during the search for lesions. Interacts with UvrC in an incision complex.

The protein localises to the cytoplasm. Its function is as follows. The UvrABC repair system catalyzes the recognition and processing of DNA lesions. A damage recognition complex composed of 2 UvrA and 2 UvrB subunits scans DNA for abnormalities. Upon binding of the UvrA(2)B(2) complex to a putative damaged site, the DNA wraps around one UvrB monomer. DNA wrap is dependent on ATP binding by UvrB and probably causes local melting of the DNA helix, facilitating insertion of UvrB beta-hairpin between the DNA strands. Then UvrB probes one DNA strand for the presence of a lesion. If a lesion is found the UvrA subunits dissociate and the UvrB-DNA preincision complex is formed. This complex is subsequently bound by UvrC and the second UvrB is released. If no lesion is found, the DNA wraps around the other UvrB subunit that will check the other stand for damage. In Chlamydia muridarum (strain MoPn / Nigg), this protein is UvrABC system protein B.